We begin with the raw amino-acid sequence, 883 residues long: Glutamate receptor 2 (883 aa).

The signal sequence occupies residues 1 to 24 (MQKIMHISVLLSPVLWGLIFGVSS). At 25 to 543 (NSIQIGGLFP…GVFSFLDPLA (519 aa)) the chain is on the extracellular side. An intrachain disulfide couples cysteine 78 to cysteine 330. Asparagine 256, asparagine 370, asparagine 406, and asparagine 413 each carry an N-linked (GlcNAc...) asparagine glycan. L-glutamate is bound by residues proline 499, threonine 501, and arginine 506. The helical transmembrane segment at 544–564 (YEIWMCIVFAYIGVSVVLFLV) threads the bilayer. The Cytoplasmic portion of the chain corresponds to 565-591 (SRFSPYEWHTEEFEDGRETQSSESTNE). The segment at residues 592-607 (FGIFNSLWFSLGAFMQ) is an intramembrane region (helical; Pore-forming). Residues 608–610 (QGC) lie within the membrane without spanning it. Cysteine 610 is lipidated: S-palmitoyl cysteine. At 611–616 (DISPRS) the chain is on the cytoplasmic side. The chain crosses the membrane as a helical span at residues 617-637 (LSGRIVGGVWWFFTLIIISSY). Topologically, residues 638 to 812 (TANLAAFLTV…EKTSALSLSN (175 aa)) are extracellular. Positions 675 and 676 each coordinate L-glutamate. At serine 683 the chain carries Phosphoserine; by PKC. Residue serine 717 is modified to Phosphoserine; by PKG. L-glutamate is bound at residue glutamate 726. The cysteines at positions 739 and 794 are disulfide-linked. Residues 813-833 (VAGVFYILVGGLGLAMLVALI) traverse the membrane as a helical segment. The Cytoplasmic segment spans residues 834 to 883 (EFCYKSRAEAKRMKVAKNAQNINPSSSQNSQNFATYKEGYNVYGIESVKI). Cysteine 836 carries S-palmitoyl cysteine lipidation. Phosphoserine is present on residues serine 860 and serine 863. Positions 867–877 (ATYKEGYNVYG) are required for interaction with IQSEC1. The residue at position 876 (tyrosine 876) is a Phosphotyrosine. The residue at position 880 (serine 880) is a Phosphoserine.

The protein belongs to the glutamate-gated ion channel (TC 1.A.10.1) family. GRIA2 subfamily. In terms of assembly, homotetramer or heterotetramer of pore-forming glutamate receptor subunits. Tetramers may be formed by the dimerization of dimers. May interact with MPP4. Forms a ternary complex with GRIP1 and CSPG4. Interacts with ATAD1 in an ATP-dependent manner. ATAD1-catalyzed ATP hydrolysis disrupts binding to ATAD1 and to GRIP1 and leads to AMPAR complex disassembly. Interacts with GRIP1 and GRIP2. Interacts with NSF via its C-terminus. Isoform 1, but not isoform 3, interacts with PICK1. Interacts with CACNG2. Interacts with GRIA1 and SYNDIG1. Part of a complex containing GRIA2, NSF and NAPA and/or NAPB. Interacts with SNX27 (via PDZ domain); the interaction is required for recycling to the plasma membrane when endocytosed and prevent degradation in lysosomes. Interacts with LRFN1. Found in a complex with GRIA1, GRIA3, GRIA4, CNIH2, CNIH3, CACNG2, CACNG3, CACNG4, CACNG5, CACNG7 and CACNG8. Interacts with CACNG5. Interacts with OLFM2. Interacts with AP4B1, AP4E1 and AP4M1; probably indirect it mediates the somatodendritic localization of GRIA2 in neurons. Forms a complex with GRIP1, NSG1 and STX12; controls the intracellular fate of AMPAR and the endosomal sorting of the GRIA2 subunit toward recycling and membrane targeting. Interacts with IQSEC1; the interaction is required for ARF6 activation. Interacts (heterotetramer form) with CNIH2 and CNIH3; this interaction promotes expression at the plasma membrane and extensively modulates their gating properties by slowing deactivation and desensitization kinetics. In terms of processing, palmitoylated. Depalmitoylated upon L-glutamate stimulation. ZDHHC3/GODZ specifically palmitoylates Cys-610, which leads to Golgi retention and decreased cell surface expression. In contrast, Cys-836 palmitoylation does not affect cell surface expression but regulates stimulation-dependent endocytosis. N-glycosylated. Post-translationally, ubiquitinated by RNF167, leading to its degradation. In terms of processing, phosphorylation at Tyr-876 is required for interaction with IQSEC1 and ARF6 activation, which in turn triggers AMPAR internalization for persistent synaptic depression. As to expression, detected in brain cortex, hippocampus and cerebellum (at protein level). Detected in hippocampus.

The protein localises to the cell membrane. It localises to the postsynaptic cell membrane. Its subcellular location is the postsynaptic density membrane. It catalyses the reaction Ca(2+)(in) = Ca(2+)(out). The enzyme catalyses Na(+)(in) = Na(+)(out). Functionally, ionotropic glutamate receptor that functions as a ligand-gated cation channel, gated by L-glutamate and glutamatergic agonists such as alpha-amino-3-hydroxy-5-methyl-4-isoxazolepropionic acid (AMPA), quisqualic acid, and kainic acid. L-glutamate acts as an excitatory neurotransmitter at many synapses in the central nervous system and plays an important role in fast excitatory synaptic transmission. Binding of the excitatory neurotransmitter L-glutamate induces a conformation change, leading to the opening of the cation channel, and thereby converts the chemical signal to an electrical impulse upon entry of monovalent and divalent cations such as sodium and calcium. The receptor then desensitizes rapidly and enters in a transient inactive state, characterized by the presence of bound agonist. In the presence of CACNG4 or CACNG7 or CACNG8, shows resensitization which is characterized by a delayed accumulation of current flux upon continued application of L-glutamate. Through complex formation with NSG1, GRIP1 and STX12 controls the intracellular fate of AMPAR and the endosomal sorting of the GRIA2 subunit toward recycling and membrane targeting. The protein is Glutamate receptor 2 of Mus musculus (Mouse).